Reading from the N-terminus, the 215-residue chain is NADH-quinone oxidoreductase subunit C (215 aa).

The protein belongs to the complex I 30 kDa subunit family. NDH-1 is composed of 14 different subunits. Subunits NuoB, C, D, E, F, and G constitute the peripheral sector of the complex.

The protein localises to the cell inner membrane. The catalysed reaction is a quinone + NADH + 5 H(+)(in) = a quinol + NAD(+) + 4 H(+)(out). NDH-1 shuttles electrons from NADH, via FMN and iron-sulfur (Fe-S) centers, to quinones in the respiratory chain. The immediate electron acceptor for the enzyme in this species is believed to be ubiquinone. Couples the redox reaction to proton translocation (for every two electrons transferred, four hydrogen ions are translocated across the cytoplasmic membrane), and thus conserves the redox energy in a proton gradient. The polypeptide is NADH-quinone oxidoreductase subunit C (Francisella philomiragia subsp. philomiragia (strain ATCC 25017 / CCUG 19701 / FSC 153 / O#319-036)).